A 270-amino-acid chain; its full sequence is 3-methyl-2-oxobutanoate hydroxymethyltransferase (270 aa).

Positions 53 and 92 each coordinate Mg(2+). Residues 53–54 (DS), D92, and K120 contribute to the 3-methyl-2-oxobutanoate site. E122 contributes to the Mg(2+) binding site. Catalysis depends on E189, which acts as the Proton acceptor.

This sequence belongs to the PanB family. As to quaternary structure, homodecamer; pentamer of dimers. It depends on Mg(2+) as a cofactor.

The protein resides in the cytoplasm. The enzyme catalyses 3-methyl-2-oxobutanoate + (6R)-5,10-methylene-5,6,7,8-tetrahydrofolate + H2O = 2-dehydropantoate + (6S)-5,6,7,8-tetrahydrofolate. It participates in cofactor biosynthesis; (R)-pantothenate biosynthesis; (R)-pantoate from 3-methyl-2-oxobutanoate: step 1/2. Catalyzes the reversible reaction in which hydroxymethyl group from 5,10-methylenetetrahydrofolate is transferred onto alpha-ketoisovalerate to form ketopantoate. In Saccharophagus degradans (strain 2-40 / ATCC 43961 / DSM 17024), this protein is 3-methyl-2-oxobutanoate hydroxymethyltransferase.